The sequence spans 152 residues: Phosphoribosyl-AMP cyclohydrolase (152 aa).

Asp92 contributes to the Mg(2+) binding site. Zn(2+) is bound at residue Cys93. Mg(2+) contacts are provided by Asp94 and Asp96. Zn(2+) is bound by residues Cys111 and Cys118.

It belongs to the PRA-CH family. Homodimer. Requires Mg(2+) as cofactor. Zn(2+) is required as a cofactor.

The protein localises to the cytoplasm. It catalyses the reaction 1-(5-phospho-beta-D-ribosyl)-5'-AMP + H2O = 1-(5-phospho-beta-D-ribosyl)-5-[(5-phospho-beta-D-ribosylamino)methylideneamino]imidazole-4-carboxamide. The protein operates within amino-acid biosynthesis; L-histidine biosynthesis; L-histidine from 5-phospho-alpha-D-ribose 1-diphosphate: step 3/9. Functionally, catalyzes the hydrolysis of the adenine ring of phosphoribosyl-AMP. The polypeptide is Phosphoribosyl-AMP cyclohydrolase (Sinorhizobium fredii (strain NBRC 101917 / NGR234)).